A 66-amino-acid chain; its full sequence is UPF0337 protein pc0632 (66 aa).

This sequence belongs to the UPF0337 (CsbD) family.

The sequence is that of UPF0337 protein pc0632 from Protochlamydia amoebophila (strain UWE25).